Here is a 291-residue protein sequence, read N- to C-terminus: Diaminopimelate epimerase (291 aa).

Substrate is bound by residues Asn13, Gln46, and Asn66. Catalysis depends on Cys75, which acts as the Proton donor. Residues 76–77 (GN), Asn156, Asn189, and 207–208 (ER) contribute to the substrate site. Cys216 serves as the catalytic Proton acceptor. 217–218 (GS) serves as a coordination point for substrate.

Belongs to the diaminopimelate epimerase family. As to quaternary structure, homodimer.

The protein localises to the cytoplasm. The enzyme catalyses (2S,6S)-2,6-diaminopimelate = meso-2,6-diaminopimelate. The protein operates within amino-acid biosynthesis; L-lysine biosynthesis via DAP pathway; DL-2,6-diaminopimelate from LL-2,6-diaminopimelate: step 1/1. Functionally, catalyzes the stereoinversion of LL-2,6-diaminopimelate (L,L-DAP) to meso-diaminopimelate (meso-DAP), a precursor of L-lysine and an essential component of the bacterial peptidoglycan. The protein is Diaminopimelate epimerase of Rhodospirillum centenum (strain ATCC 51521 / SW).